The chain runs to 395 residues: Abhydrolase domain-containing protein (395 aa).

In terms of domain architecture, AB hydrolase-1 spans 117-331 (PTIVINHGLT…INAIDDPIAP (215 aa)). Active-site charge relay system residues include Ser-200, Asp-327, and His-356.

The protein belongs to the AB hydrolase superfamily. AB hydrolase 4 family.

This chain is Abhydrolase domain-containing protein (abhd), found in Dictyostelium discoideum (Social amoeba).